The chain runs to 105 residues: Fluoride-specific ion channel FluC (105 aa).

Transmembrane regions (helical) follow at residues 14 to 34 (FPLP…VFVV), 44 to 64 (LSPL…AFSL), and 79 to 99 (ALYV…GLWL). Na(+)-binding residues include Gly54 and Thr57.

This sequence belongs to the fluoride channel Fluc/FEX (TC 1.A.43) family.

It localises to the cell inner membrane. It carries out the reaction fluoride(in) = fluoride(out). With respect to regulation, na(+) is not transported, but it plays an essential structural role and its presence is essential for fluoride channel function. Functionally, fluoride-specific ion channel. Important for reducing fluoride concentration in the cell, thus reducing its toxicity. The protein is Fluoride-specific ion channel FluC of Jannaschia sp. (strain CCS1).